The primary structure comprises 293 residues: tRNA (guanine-N(7)-)-methyltransferase (293 aa).

Positions 1–31 (MGGDKIKKDKRQKREDYRAAMRKDDISELPR) are enriched in basic and acidic residues. Disordered regions lie at residues 1 to 33 (MGGD…PRKK) and 68 to 97 (IVDE…TPLR). The segment covering 75–85 (TSPPPPPPVPE) has biased composition (pro residues). Residues glycine 111, 134 to 135 (EI), 169 to 170 (NT), and cysteine 189 contribute to the S-adenosyl-L-methionine site. Aspartate 192 is a catalytic residue. 267-269 (TEE) is a binding site for S-adenosyl-L-methionine.

It belongs to the class I-like SAM-binding methyltransferase superfamily. TrmB family. Forms a complex with TRM82.

It is found in the nucleus. The enzyme catalyses guanosine(46) in tRNA + S-adenosyl-L-methionine = N(7)-methylguanosine(46) in tRNA + S-adenosyl-L-homocysteine. It functions in the pathway tRNA modification; N(7)-methylguanine-tRNA biosynthesis. Its function is as follows. Catalyzes the formation of N(7)-methylguanine at position 46 (m7G46) in tRNA. This is tRNA (guanine-N(7)-)-methyltransferase from Chaetomium globosum (strain ATCC 6205 / CBS 148.51 / DSM 1962 / NBRC 6347 / NRRL 1970) (Soil fungus).